The sequence spans 355 residues: DNA polymerase IV (355 aa).

The region spanning 7–188 (IIHIDMDCFY…LPLSKIPGVG (182 aa)) is the UmuC domain. Mg(2+)-binding residues include Asp-11 and Asp-106. Residue Glu-107 is part of the active site.

The protein belongs to the DNA polymerase type-Y family. Monomer. Mg(2+) serves as cofactor.

Its subcellular location is the cytoplasm. The catalysed reaction is DNA(n) + a 2'-deoxyribonucleoside 5'-triphosphate = DNA(n+1) + diphosphate. Poorly processive, error-prone DNA polymerase involved in untargeted mutagenesis. Copies undamaged DNA at stalled replication forks, which arise in vivo from mismatched or misaligned primer ends. These misaligned primers can be extended by PolIV. Exhibits no 3'-5' exonuclease (proofreading) activity. May be involved in translesional synthesis, in conjunction with the beta clamp from PolIII. The polypeptide is DNA polymerase IV (Mannheimia succiniciproducens (strain KCTC 0769BP / MBEL55E)).